The primary structure comprises 367 residues: Probable butyrate kinase (367 aa).

The protein belongs to the acetokinase family.

It localises to the cytoplasm. It carries out the reaction butanoate + ATP = butanoyl phosphate + ADP. In Bacillus cereus (strain ATCC 14579 / DSM 31 / CCUG 7414 / JCM 2152 / NBRC 15305 / NCIMB 9373 / NCTC 2599 / NRRL B-3711), this protein is Probable butyrate kinase.